The sequence spans 311 residues: L-lactate dehydrogenase (311 aa).

NAD(+)-binding positions include Val-12, Asp-33, Lys-38, Tyr-63, and 77-78 (GA). Residues Gln-80, Arg-86, and 118-121 (NPVD) each bind substrate. Residues 116 to 118 (VTN) and Ser-141 contribute to the NAD(+) site. 146–149 (DSAR) serves as a coordination point for substrate. Positions 151 and 166 each coordinate beta-D-fructose 1,6-bisphosphate. The active-site Proton acceptor is His-173. Position 219 is a phosphotyrosine (Tyr-219). Position 228 (Thr-228) interacts with substrate.

The protein belongs to the LDH/MDH superfamily. LDH family. As to quaternary structure, homotetramer.

The protein resides in the cytoplasm. The catalysed reaction is (S)-lactate + NAD(+) = pyruvate + NADH + H(+). The protein operates within fermentation; pyruvate fermentation to lactate; (S)-lactate from pyruvate: step 1/1. Allosterically activated by fructose 1,6-bisphosphate (FBP). In terms of biological role, catalyzes the conversion of lactate to pyruvate. The protein is L-lactate dehydrogenase of Thermoanaerobacter pseudethanolicus (strain ATCC 33223 / 39E) (Clostridium thermohydrosulfuricum).